The sequence spans 211 residues: Cytochrome c biogenesis ATP-binding export protein CcmA (211 aa).

Residues L17–W209 enclose the ABC transporter domain. G49–S56 serves as a coordination point for ATP.

The protein belongs to the ABC transporter superfamily. CcmA exporter (TC 3.A.1.107) family. As to quaternary structure, the complex is composed of two ATP-binding proteins (CcmA) and two transmembrane proteins (CcmB).

The protein localises to the cell inner membrane. It carries out the reaction heme b(in) + ATP + H2O = heme b(out) + ADP + phosphate + H(+). Part of the ABC transporter complex CcmAB involved in the biogenesis of c-type cytochromes; once thought to export heme, this seems not to be the case, but its exact role is uncertain. Responsible for energy coupling to the transport system. This Gluconobacter oxydans (strain 621H) (Gluconobacter suboxydans) protein is Cytochrome c biogenesis ATP-binding export protein CcmA.